We begin with the raw amino-acid sequence, 142 residues long: Large ribosomal subunit protein uL11 (142 aa).

This sequence belongs to the universal ribosomal protein uL11 family. As to quaternary structure, part of the ribosomal stalk of the 50S ribosomal subunit. Interacts with L10 and the large rRNA to form the base of the stalk. L10 forms an elongated spine to which L12 dimers bind in a sequential fashion forming a multimeric L10(L12)X complex. In terms of processing, one or more lysine residues are methylated.

Functionally, forms part of the ribosomal stalk which helps the ribosome interact with GTP-bound translation factors. The sequence is that of Large ribosomal subunit protein uL11 from Xanthomonas campestris pv. campestris (strain B100).